The following is a 603-amino-acid chain: Elongation factor 4 (603 aa).

Residues 7–189 (SRIRNFSIIA…SIVQLVPPPQ (183 aa)) enclose the tr-type G domain. GTP contacts are provided by residues 19-24 (DHGKST) and 136-139 (NKID).

This sequence belongs to the TRAFAC class translation factor GTPase superfamily. Classic translation factor GTPase family. LepA subfamily.

It localises to the cell inner membrane. It carries out the reaction GTP + H2O = GDP + phosphate + H(+). Required for accurate and efficient protein synthesis under certain stress conditions. May act as a fidelity factor of the translation reaction, by catalyzing a one-codon backward translocation of tRNAs on improperly translocated ribosomes. Back-translocation proceeds from a post-translocation (POST) complex to a pre-translocation (PRE) complex, thus giving elongation factor G a second chance to translocate the tRNAs correctly. Binds to ribosomes in a GTP-dependent manner. In Microcystis aeruginosa (strain NIES-843 / IAM M-2473), this protein is Elongation factor 4.